The primary structure comprises 135 residues: Cytochrome c-type biogenesis protein CcmE (135 aa).

The Cytoplasmic segment spans residues 1-8; the sequence is MLLLRWKR. A helical; Signal-anchor for type II membrane protein membrane pass occupies residues 9–29; the sequence is FWFLSLGILLFSGVVSLMLFN. The Periplasmic segment spans residues 30-135; the sequence is LSESISFFYL…EDFIKSVRGE (106 aa). Heme-binding residues include His-118 and Tyr-122.

It belongs to the CcmE/CycJ family.

The protein resides in the cell inner membrane. Heme chaperone required for the biogenesis of c-type cytochromes. Transiently binds heme delivered by CcmC and transfers the heme to apo-cytochromes in a process facilitated by CcmF and CcmH. This is Cytochrome c-type biogenesis protein CcmE from Neorickettsia sennetsu (strain ATCC VR-367 / Miyayama) (Ehrlichia sennetsu).